Reading from the N-terminus, the 234-residue chain is 2,3,4,5-tetrahydropyridine-2,6-dicarboxylate N-acetyltransferase (234 aa).

It belongs to the transferase hexapeptide repeat family. DapH subfamily.

It carries out the reaction (S)-2,3,4,5-tetrahydrodipicolinate + acetyl-CoA + H2O = L-2-acetamido-6-oxoheptanedioate + CoA. Its pathway is amino-acid biosynthesis; L-lysine biosynthesis via DAP pathway; LL-2,6-diaminopimelate from (S)-tetrahydrodipicolinate (acetylase route): step 1/3. In terms of biological role, catalyzes the transfer of an acetyl group from acetyl-CoA to tetrahydrodipicolinate. This Lacticaseibacillus casei (strain BL23) (Lactobacillus casei) protein is 2,3,4,5-tetrahydropyridine-2,6-dicarboxylate N-acetyltransferase.